The chain runs to 72 residues: uncharacterized protein (72 aa).

This sequence belongs to the ycf76 family.

Its subcellular location is the plastid. The protein localises to the chloroplast. This is an uncharacterized protein from Oryza nivara (Indian wild rice).